A 212-amino-acid polypeptide reads, in one-letter code: Ribosomal RNA small subunit methyltransferase G (212 aa).

Residues glycine 80, leucine 85, 131 to 132 (AE), and arginine 146 each bind S-adenosyl-L-methionine.

This sequence belongs to the methyltransferase superfamily. RNA methyltransferase RsmG family.

Its subcellular location is the cytoplasm. It catalyses the reaction guanosine(527) in 16S rRNA + S-adenosyl-L-methionine = N(7)-methylguanosine(527) in 16S rRNA + S-adenosyl-L-homocysteine. Its function is as follows. Specifically methylates the N7 position of guanine in position 527 of 16S rRNA. The polypeptide is Ribosomal RNA small subunit methyltransferase G (Xanthomonas campestris pv. campestris (strain 8004)).